The sequence spans 370 residues: Polygalacturonase 1 (370 aa).

The first 18 residues, 1–18, serve as a signal peptide directing secretion; it reads MRTSILSMLALGAAAVSA. An intrachain disulfide couples Cys36 to Cys51. 5 PbH1 repeats span residues 163-194, 195-216, 217-237, 246-267, and 275-297; these read ADNL…DVGE, STYI…AINS, GENI…SIGS, VKNV…RIKT, and VADV…VIEQ. Residue Asp209 is the Proton donor of the active site. The cysteines at positions 211 and 227 are disulfide-linked. Residue His231 is part of the active site. Residue Asn248 is glycosylated (N-linked (GlcNAc...) asparagine). Cystine bridges form between Cys337–Cys342 and Cys361–Cys370.

It belongs to the glycosyl hydrolase 28 family.

Its subcellular location is the secreted. The catalysed reaction is (1,4-alpha-D-galacturonosyl)n+m + H2O = (1,4-alpha-D-galacturonosyl)n + (1,4-alpha-D-galacturonosyl)m.. In Penicillium olsonii, this protein is Polygalacturonase 1 (PG1).